The primary structure comprises 422 residues: Glycerol-3-phosphate dehydrogenase [NAD(+)] 2 (422 aa).

Residues G69–G74, F157, K180, and A213 each bind NAD(+). K180 provides a ligand contact to substrate. K273 acts as the Proton acceptor in catalysis. NAD(+) is bound by residues R338 and Q367. Residue R338 to N339 coordinates substrate.

It belongs to the NAD-dependent glycerol-3-phosphate dehydrogenase family.

It catalyses the reaction sn-glycerol 3-phosphate + NAD(+) = dihydroxyacetone phosphate + NADH + H(+). The polypeptide is Glycerol-3-phosphate dehydrogenase [NAD(+)] 2 (GPD2) (Candida glabrata (strain ATCC 2001 / BCRC 20586 / JCM 3761 / NBRC 0622 / NRRL Y-65 / CBS 138) (Yeast)).